A 94-amino-acid chain; its full sequence is Acylphosphatase (94 aa).

The Acylphosphatase-like domain maps to 8–94 (RLTAWVHGRV…REQITGFHER (87 aa)). Residues arginine 23 and asparagine 41 contribute to the active site.

Belongs to the acylphosphatase family.

The catalysed reaction is an acyl phosphate + H2O = a carboxylate + phosphate + H(+). This chain is Acylphosphatase (acyP), found in Mycobacterium sp. (strain KMS).